Here is a 343-residue protein sequence, read N- to C-terminus: Fructose-1,6-bisphosphatase class 1 (343 aa).

Residues Glu-90, Asp-109, Leu-111, and Asp-112 each coordinate Mg(2+). Residues 112 to 115 and Asn-199 each bind substrate; that span reads DGSS. Glu-271 serves as a coordination point for Mg(2+).

It belongs to the FBPase class 1 family. As to quaternary structure, homotetramer. Requires Mg(2+) as cofactor.

The protein resides in the cytoplasm. The enzyme catalyses beta-D-fructose 1,6-bisphosphate + H2O = beta-D-fructose 6-phosphate + phosphate. It participates in carbohydrate biosynthesis; Calvin cycle. This chain is Fructose-1,6-bisphosphatase class 1, found in Rhodopseudomonas palustris (strain HaA2).